Consider the following 182-residue polypeptide: ATP synthase subunit delta (182 aa).

The protein belongs to the ATPase delta chain family. F-type ATPases have 2 components, F(1) - the catalytic core - and F(0) - the membrane proton channel. F(1) has five subunits: alpha(3), beta(3), gamma(1), delta(1), epsilon(1). F(0) has three main subunits: a(1), b(2) and c(10-14). The alpha and beta chains form an alternating ring which encloses part of the gamma chain. F(1) is attached to F(0) by a central stalk formed by the gamma and epsilon chains, while a peripheral stalk is formed by the delta and b chains.

The protein localises to the cell inner membrane. Its function is as follows. F(1)F(0) ATP synthase produces ATP from ADP in the presence of a proton or sodium gradient. F-type ATPases consist of two structural domains, F(1) containing the extramembraneous catalytic core and F(0) containing the membrane proton channel, linked together by a central stalk and a peripheral stalk. During catalysis, ATP synthesis in the catalytic domain of F(1) is coupled via a rotary mechanism of the central stalk subunits to proton translocation. In terms of biological role, this protein is part of the stalk that links CF(0) to CF(1). It either transmits conformational changes from CF(0) to CF(1) or is implicated in proton conduction. This chain is ATP synthase subunit delta, found in Pseudothermotoga lettingae (strain ATCC BAA-301 / DSM 14385 / NBRC 107922 / TMO) (Thermotoga lettingae).